A 201-amino-acid chain; its full sequence is Natural cytotoxicity triggering receptor 3 (201 aa).

An N-terminal signal peptide occupies residues Met1–Ala18. In terms of domain architecture, Ig-like spans Leu19–Val126. The Extracellular portion of the chain corresponds to Leu19 to Gln133. A disulfide bridge connects residues Cys39 and Cys108. N-linked (GlcNAc...) asparagine glycans are attached at residues Asn42 and Asn121. Residues Leu134–Val154 traverse the membrane as a helical segment. At Ala155 to Gly201 the chain is on the cytoplasmic side.

This sequence belongs to the natural cytotoxicity receptor (NCR) family. Homodimer in the unliganted form. Interacts with CD3Z. Interacts with and is activated by binding to NCR3LG1. Interacts with and is activated by binding to BAG6. Interacts with and is inhibited by binding to LGALS3.

The protein resides in the cell membrane. Functionally, cell membrane receptor of natural killer/NK cells that is activated by binding of extracellular ligands including BAG6 and NCR3LG1. Stimulates NK cells cytotoxicity toward neighboring cells producing these ligands. It controls, for instance, NK cells cytotoxicity against tumor cells. Engagement of NCR3 by BAG6 also promotes myeloid dendritic cells (DC) maturation, both through killing DCs that did not acquire a mature phenotype, and inducing the release by NK cells of TNFA and IFNG that promote DC maturation. This chain is Natural cytotoxicity triggering receptor 3 (NCR3), found in Macaca mulatta (Rhesus macaque).